The chain runs to 120 residues: Large ribosomal subunit protein uL18 (120 aa).

The disordered stretch occupies residues 1 to 22 (MKVDRKTATHRRHQRIRRKIAG). The span at 8-20 (ATHRRHQRIRRKI) shows a compositional bias: basic residues.

It belongs to the universal ribosomal protein uL18 family. As to quaternary structure, part of the 50S ribosomal subunit; part of the 5S rRNA/L5/L18/L25 subcomplex. Contacts the 5S and 23S rRNAs.

This is one of the proteins that bind and probably mediate the attachment of the 5S RNA into the large ribosomal subunit, where it forms part of the central protuberance. The polypeptide is Large ribosomal subunit protein uL18 (Gloeobacter violaceus (strain ATCC 29082 / PCC 7421)).